Reading from the N-terminus, the 359-residue chain is 3-dehydroquinate synthase (359 aa).

NAD(+) contacts are provided by residues 71 to 76, 104 to 108, 128 to 129, Lys-141, Lys-150, and 168 to 171; these read DGEQYK, GVVGD, TT, and TLNT. Residues Glu-183, His-247, and His-264 each contribute to the Zn(2+) site.

It belongs to the sugar phosphate cyclases superfamily. Dehydroquinate synthase family. Co(2+) is required as a cofactor. Requires Zn(2+) as cofactor. NAD(+) serves as cofactor.

It is found in the cytoplasm. The catalysed reaction is 7-phospho-2-dehydro-3-deoxy-D-arabino-heptonate = 3-dehydroquinate + phosphate. Its pathway is metabolic intermediate biosynthesis; chorismate biosynthesis; chorismate from D-erythrose 4-phosphate and phosphoenolpyruvate: step 2/7. Catalyzes the conversion of 3-deoxy-D-arabino-heptulosonate 7-phosphate (DAHP) to dehydroquinate (DHQ). The protein is 3-dehydroquinate synthase of Coxiella burnetii (strain Dugway 5J108-111).